The sequence spans 168 residues: Ribosome maturation factor RimM (168 aa).

Residues 95 to 168 (EEGYYWSDLI…RITVDWGLDY (74 aa)) form the PRC barrel domain.

This sequence belongs to the RimM family. As to quaternary structure, binds ribosomal protein uS19.

The protein localises to the cytoplasm. Functionally, an accessory protein needed during the final step in the assembly of 30S ribosomal subunit, possibly for assembly of the head region. Essential for efficient processing of 16S rRNA. May be needed both before and after RbfA during the maturation of 16S rRNA. It has affinity for free ribosomal 30S subunits but not for 70S ribosomes. The polypeptide is Ribosome maturation factor RimM (Nitrosospira multiformis (strain ATCC 25196 / NCIMB 11849 / C 71)).